A 269-amino-acid polypeptide reads, in one-letter code: 4-hydroxy-tetrahydrodipicolinate reductase (269 aa).

NAD(+)-binding positions include Gly8–Met13 and Glu34. An NADP(+)-binding site is contributed by Arg35. NAD(+) is bound by residues Gly98–Thr100 and Ala122–Tyr125. His155 functions as the Proton donor/acceptor in the catalytic mechanism. Residue His156 participates in (S)-2,3,4,5-tetrahydrodipicolinate binding. Residue Lys159 is the Proton donor of the active site. Gly165–Thr166 serves as a coordination point for (S)-2,3,4,5-tetrahydrodipicolinate.

It belongs to the DapB family.

Its subcellular location is the cytoplasm. It carries out the reaction (S)-2,3,4,5-tetrahydrodipicolinate + NAD(+) + H2O = (2S,4S)-4-hydroxy-2,3,4,5-tetrahydrodipicolinate + NADH + H(+). It catalyses the reaction (S)-2,3,4,5-tetrahydrodipicolinate + NADP(+) + H2O = (2S,4S)-4-hydroxy-2,3,4,5-tetrahydrodipicolinate + NADPH + H(+). The protein operates within amino-acid biosynthesis; L-lysine biosynthesis via DAP pathway; (S)-tetrahydrodipicolinate from L-aspartate: step 4/4. Its function is as follows. Catalyzes the conversion of 4-hydroxy-tetrahydrodipicolinate (HTPA) to tetrahydrodipicolinate. This is 4-hydroxy-tetrahydrodipicolinate reductase from Vibrio vulnificus (strain CMCP6).